A 316-amino-acid polypeptide reads, in one-letter code: Actin patches distal protein 1 (316 aa).

This sequence belongs to the APD1 family.

It is found in the cytoplasm. The protein resides in the nucleus. In terms of biological role, required for normal localization of actin patches. Involved in tolerance to sodium ions and hydrogen peroxide. This is Actin patches distal protein 1 (APD1) from Saccharomyces cerevisiae (strain ATCC 204508 / S288c) (Baker's yeast).